The primary structure comprises 159 residues: Lipoprotein signal peptidase (159 aa).

The next 3 helical transmembrane spans lie at 4-24 (PYFVSITLFITIAVLILDQVT), 64-84 (MSFFFIVTIVVLGLLVFFYIK), and 88-108 (GNFLMQVAISLLFAGALGNFI). Active-site residues include D118 and D136. The helical transmembrane segment at 131-151 (IFNGADSSLTIGVILVLIALL) threads the bilayer.

The protein belongs to the peptidase A8 family.

Its subcellular location is the cell membrane. The catalysed reaction is Release of signal peptides from bacterial membrane prolipoproteins. Hydrolyzes -Xaa-Yaa-Zaa-|-(S,diacylglyceryl)Cys-, in which Xaa is hydrophobic (preferably Leu), and Yaa (Ala or Ser) and Zaa (Gly or Ala) have small, neutral side chains.. It participates in protein modification; lipoprotein biosynthesis (signal peptide cleavage). Its function is as follows. This protein specifically catalyzes the removal of signal peptides from prolipoproteins. This is Lipoprotein signal peptidase from Staphylococcus carnosus (strain TM300).